The following is a 279-amino-acid chain: NADPH-dependent 7-cyano-7-deazaguanine reductase (279 aa).

Residue 86–88 (IES) coordinates substrate. 88 to 89 (SK) provides a ligand contact to NADPH. The Thioimide intermediate role is filled by C187. Residue D194 is the Proton donor of the active site. Position 226–227 (226–227 (HE)) interacts with substrate. 255–256 (RG) contacts NADPH.

The protein belongs to the GTP cyclohydrolase I family. QueF type 2 subfamily. As to quaternary structure, homodimer.

It is found in the cytoplasm. It carries out the reaction 7-aminomethyl-7-carbaguanine + 2 NADP(+) = 7-cyano-7-deazaguanine + 2 NADPH + 3 H(+). It functions in the pathway tRNA modification; tRNA-queuosine biosynthesis. Functionally, catalyzes the NADPH-dependent reduction of 7-cyano-7-deazaguanine (preQ0) to 7-aminomethyl-7-deazaguanine (preQ1). The protein is NADPH-dependent 7-cyano-7-deazaguanine reductase of Actinobacillus pleuropneumoniae serotype 3 (strain JL03).